Consider the following 64-residue polypeptide: Large ribosomal subunit protein bL35 (64 aa).

Positions 1-44 (MPKLKTNRGAAKRFKVKASGRISRARSNHSHILTKKDPKRKRRL) are disordered. The segment covering 10-44 (AAKRFKVKASGRISRARSNHSHILTKKDPKRKRRL) has biased composition (basic residues).

Belongs to the bacterial ribosomal protein bL35 family.

The protein is Large ribosomal subunit protein bL35 of Halorhodospira halophila (strain DSM 244 / SL1) (Ectothiorhodospira halophila (strain DSM 244 / SL1)).